A 1373-amino-acid chain; its full sequence is Poly(A) RNA polymerase gld-2 homolog B (1373 aa).

A compositionally biased stretch (low complexity) spans 75-91; the sequence is NSCHSSNSSSNTSNNNN. 6 disordered regions span residues 75–155, 175–340, 425–543, 734–770, 802–866, and 880–928; these read NSCH…QEKQ, SDCK…FWKT, PDST…QQQK, PQQQ…FADG, CGSG…ALGS, and HPLH…PTPV. Residues 96–112 show a composition bias toward polar residues; it reads GQQQQPLHYCNSNNSHS. Composition is skewed to low complexity over residues 130–152, 180–219, 228–251, and 274–284; these read QQQQ…QMQQ, SDSN…SCSN, NENS…NTSS, and ESGSSEGAAES. Polar residues-rich tracts occupy residues 295 to 340 and 430 to 442; these read CNSN…FWKT and KSSS…NMIR. Over residues 443 to 485 the composition is skewed to low complexity; the sequence is SSSNGNSNFSRHQYGHQSTGSGYQQQQQRYRNAQNVYQQYQHQ. The span at 486-502 shows a compositional bias: basic residues; sequence QQHHAQQHTHPHFRRKH. 2 stretches are compositionally biased toward low complexity: residues 735 to 753 and 819 to 844; these read QQQQ…GTSS and AGAL…SGTS. A compositionally biased stretch (polar residues) spans 855–866; that stretch reads PSISPTPSALGS. Residues 880-890 are compositionally biased toward low complexity; the sequence is HPLHQQHPPSH. The segment at 945 to 1373 is sufficent for interaction with Dcr-2; the sequence is RYLAQARNIE…FAETTAAHVA (429 aa). D1029 and D1031 together coordinate Mg(2+). One can recognise a PAP-associated domain in the interval 1211-1272; the sequence is TLGEHLLGFF…NIEEPFDLSN (62 aa). The span at 1320 to 1341 shows a compositional bias: low complexity; that stretch reads LQQHQQQFEQQLHHPISGQQRS. Residues 1320 to 1359 are disordered; that stretch reads LQQHQQQFEQQLHHPISGQQRSAGGGGDGANPVPSTLNPD.

Belongs to the DNA polymerase type-B-like family. GLD2 subfamily. Interacts with orb, an RNA-binding protein, generating an ovarian cytoplasmic polyadenylation complex. Interacts (via C-terminus) with Dcr-2. It depends on Mg(2+) as a cofactor. The cofactor is Mn(2+). In terms of tissue distribution, expressed in ovaries. Not expressed in adult males.

The protein resides in the cytoplasm. The enzyme catalyses RNA(n) + ATP = RNA(n)-3'-adenine ribonucleotide + diphosphate. In terms of biological role, cytoplasmic poly(A) RNA polymerase that adds successive AMP monomers to the 3'-end of specific maternal RNAs (bcd, Tl, and tor), forming a poly(A) tail, during late oogenesis and early embryogenesis. In contrast to the canonical nuclear poly(A) RNA polymerase, it only adds poly(A) to selected cytoplasmic mRNAs. Required for localization of mRNAs to both poles of the egg, to recruit or maintain known centrosomal proteins with two types of microtubule organizing centers (MTOCs): the central MTOC that forms between the meiosis II tandem spindles and the centrosomes of the mitotic spindle. Required at the final stage of oogenesis for meiosis I metaphase arrest and for progression beyond this stage. Functions with the RNA-binding protein Dcr-2 to promote cytoplasmic polyadenylation and translational activation of certain mRNAs such as Tl and r2d2. As a consequence, is involved in regulating Toll immune signaling and promoting resistance to fungal infection. This is Poly(A) RNA polymerase gld-2 homolog B (wisp) from Drosophila melanogaster (Fruit fly).